The chain runs to 376 residues: Actin, cytoplasmic (376 aa).

Belongs to the actin family.

It localises to the cytoplasm. It is found in the cytoskeleton. The catalysed reaction is ATP + H2O = ADP + phosphate + H(+). In terms of biological role, actins are highly conserved proteins that are involved in various types of cell motility and are ubiquitously expressed in all eukaryotic cells. The protein is Actin, cytoplasmic of Tetrahymena pyriformis.